Here is a 387-residue protein sequence, read N- to C-terminus: Na(+)/H(+) antiporter NhaA (387 aa).

A run of 12 helical transmembrane segments spans residues 16–36 (AGGV…NSSI), 53–73 (IEHY…GLEL), 89–109 (LLPI…HMFF), 118–138 (GSGI…SLLG), 147–167 (VFLT…IAIF), 171–191 (GIDV…FILN), 197–217 (ILWP…HSGV), 220–240 (TITG…PDSI), 251–271 (PVAF…IIDS), 283–303 (IGIF…FCAI), 321–341 (VIGV…ITLL), and 354–374 (IAIM…LKMT).

This sequence belongs to the NhaA Na(+)/H(+) (TC 2.A.33) antiporter family.

It localises to the cell inner membrane. It catalyses the reaction Na(+)(in) + 2 H(+)(out) = Na(+)(out) + 2 H(+)(in). Its function is as follows. Na(+)/H(+) antiporter that extrudes sodium in exchange for external protons. In Cytophaga hutchinsonii (strain ATCC 33406 / DSM 1761 / CIP 103989 / NBRC 15051 / NCIMB 9469 / D465), this protein is Na(+)/H(+) antiporter NhaA.